A 131-amino-acid polypeptide reads, in one-letter code: Global transcriptional regulator Spx 2 (131 aa).

Residues cysteine 10 and cysteine 13 are joined by a disulfide bond.

Belongs to the ArsC family. Spx subfamily. In terms of assembly, interacts with the C-terminal domain of the alpha subunit of the RNAP.

It localises to the cytoplasm. Its function is as follows. Global transcriptional regulator that plays a key role in stress response and exerts either positive or negative regulation of genes. Acts by interacting with the C-terminal domain of the alpha subunit of the RNA polymerase (RNAP). This interaction can enhance binding of RNAP to the promoter region of target genes and stimulate their transcription, or block interaction of RNAP with activator. The polypeptide is Global transcriptional regulator Spx 2 (Bacillus cereus (strain ATCC 14579 / DSM 31 / CCUG 7414 / JCM 2152 / NBRC 15305 / NCIMB 9373 / NCTC 2599 / NRRL B-3711)).